The chain runs to 226 residues: Phosphoenolpyruvate guanylyltransferase (226 aa).

The phosphoenolpyruvate site is built by T145, G161, and S164.

The protein belongs to the CofC family.

It carries out the reaction phosphoenolpyruvate + GTP + H(+) = enolpyruvoyl-2-diphospho-5'-guanosine + diphosphate. It functions in the pathway cofactor biosynthesis; coenzyme F420 biosynthesis. In terms of biological role, guanylyltransferase that catalyzes the activation of phosphoenolpyruvate (PEP) as enolpyruvoyl-2-diphospho-5'-guanosine, via the condensation of PEP with GTP. It is involved in the biosynthesis of coenzyme F420, a hydride carrier cofactor. In Nocardia farcinica (strain IFM 10152), this protein is Phosphoenolpyruvate guanylyltransferase.